Here is a 1102-residue protein sequence, read N- to C-terminus: Ubiquitin carboxyl-terminal hydrolase 7 (1102 aa).

The segment covering 1–10 has biased composition (low complexity); the sequence is MNHQQQQQQQ. The interval 1 to 38 is disordered; that stretch reads MNHQQQQQQQKAGEQQLSEPEDMEMEAGDTDDPPRITQ. The interaction with TSPYL5 stretch occupies residues 1–208; that stretch reads MNHQQQQQQQ…APHGVAWDSK (208 aa). The residue at position 18 (serine 18) is a Phosphoserine. Positions 19-31 are enriched in acidic residues; sequence EPEDMEMEAGDTD. Serine 49 carries the post-translational modification Phosphoserine. The segment at 53 to 208 is interaction with p53/TP53, MDM2 and EBNA1; the sequence is NTAEEDMEDD…APHGVAWDSK (156 aa). An MATH domain is found at 68-195; that stretch reads EATFQFTVER…DDKVTFEVFV (128 aa). A necessary for nuclear localization region spans residues 70-205; that stretch reads TFQFTVERFS…QADAPHGVAW (136 aa). The USP domain maps to 214-521; that stretch reads VGLKNQGATC…NAYMLVYIRE (308 aa). Catalysis depends on cysteine 223, which acts as the Nucleophile. The active-site Proton acceptor is the histidine 464. The segment at 622–801 is interaction with ICP0/VMW110; that stretch reads LWPMQARSNG…HRVDVIFCDK (180 aa). Lysine 869 is modified (N6-acetyllysine; alternate). Residue lysine 869 forms a Glycyl lysine isopeptide (Lys-Gly) (interchain with G-Cter in SUMO2); alternate linkage. Residue lysine 869 forms a Glycyl lysine isopeptide (Lys-Gly) (interchain with G-Cter in ubiquitin); alternate linkage. Lysine 882 participates in a covalent cross-link: Glycyl lysine isopeptide (Lys-Gly) (interchain with G-Cter in SUMO2). Serine 963 is modified (phosphoserine). N6-acetyllysine occurs at positions 1084 and 1096.

Belongs to the peptidase C19 family. In terms of assembly, monomer. Homodimer. Part of a complex with DAXX, MDM2, RASSF1 and USP7. Part of a complex with DAXX, MDM2 and USP7. Interacts with MDM2; the interaction is independent of p53/TP53. Interacts with DAXX; the interaction is direct and independent of MDM2 and p53/TP53. Component of a complex composed of KMT2E/MLL5 (isoform 3), OGT (isoform 1) and USP7; the complex stabilizes KMT2E/MLL5, preventing KMT2E/MLL5 ubiquitination and proteasomal-mediated degradation. Interacts (via MATH domain) with KMT2E/MLL5 isoform 3. Interacts with OGT isoform 1. Interacts with FOXO4; the interaction is enhanced in presence of hydrogen peroxide and occurs independently of p53/TP53. Interacts with p53/TP53; the interaction is enhanced in response to DNA damage. Interacts with TSPYL5; this impairs interaction with p53/TP53. Interacts with PTEN; the interaction is direct. Interacts with ATXN1 and the strength of interaction is influenced by the length of the poly-Gln region in ATXN1. A weaker interaction seen with mutants having longer poly-Gln regions. Interacts with KIAA1530/UVSSA. Interacts with ABRAXAS2; the interaction is direct. Identified in a complex with TP53/p53 and ABRAXAS2. Interacts with MEX3C and antagonizes its ability to degrade mRNA. Interacts with DNMT1 and UHRF1. Interacts with FOXP3. Interacts (via MATH domain) with RNF220. Associated component of the Polycomb group (PcG) multiprotein PRC1-like complex. Interacts with EPOP. Interacts with OTUD4 and USP9X; the interaction is direct. Interacts with CRY2. Interacts with REST. Interacts with ERCC6. Part of a complex consisting of USP7, MAGEL2 and TRIM27; directly interacts with MAGEL2; directly interacts with TRIM27. (Microbial infection) Isoform 1 and isoform 2 interact with herpesvirus 1 trans-acting transcriptional protein ICP0/VMW110. Binding to ICP0/VMW110 may modulate the substrate specificity or activity of USP7 to stabilize viral proteins. As to quaternary structure, (Microbial infection) Interacts with Epstein-Barr virus EBNA1; the interaction is independent and simultaneous to EBNA1 interaction with USP7 as well as necessary for PML nuclear bodies disruption by EBNA1. EBNA1, USP7 and CSNK2B form a ternary complex. EBNA1 shows a 10-fold higher affinity than p53/TP53 and can compete with it for USP7 binding. In terms of assembly, (Microbial infection) Interacts with human cytomegalovirus proteins UL35 and UL35A; these interactions inhibit the ability of USP7 to form nuclear bodies. (Microbial infection) Interacts with herpes virus 8/HHV-8 proteins vIRF-1 and vIRF-3; these interactions may disrupt TP53 signaling pathway during viral infection by decreasing the availability of USP7 for deubiquitinating and stabilizing TP53. As to quaternary structure, (Microbial infection) Interacts with herpes virus 8/HHV-8 protein vIRF-2; this interaction modulates antiviral signaling via disruption of USP7 interactions with innate immune signaling proteins TRAF3 and TRAF6 thus affecting their ubiquitination. Isoform 1: Phosphorylated. Isoform 1 is phosphorylated at positions Ser-18 and Ser-963. Isoform 2: Not phosphorylated. Post-translationally, isoform 1: Polyneddylated. Isoform 2: Not Polyneddylated. In terms of processing, isoform 1 and isoform 2: Not sumoylated. Isoform 1 and isoform 2: Polyubiquitinated by herpesvirus 1 trans-acting transcriptional protein ICP0/VMW110; leading to its subsequent proteasomal degradation. Isoform 1: Ubiquitinated at Lys-869. Expressed in neural progenitor cells (at protein level). Widely expressed. Overexpressed in prostate cancer.

It localises to the nucleus. Its subcellular location is the cytoplasm. The protein localises to the PML body. The protein resides in the chromosome. The enzyme catalyses Thiol-dependent hydrolysis of ester, thioester, amide, peptide and isopeptide bonds formed by the C-terminal Gly of ubiquitin (a 76-residue protein attached to proteins as an intracellular targeting signal).. With respect to regulation, inhibited by N-ethyl-maleimide (NEM) and divalent cations. Tolerates high concentrations of NaCl but is inhibited at concentrations of 195 mM and higher. In terms of biological role, hydrolase that deubiquitinates target proteins such as ARMC5, FOXO4, DEPTOR, KAT5, p53/TP53, MDM2, ERCC6, DNMT1, UHRF1, PTEN, KMT2E/MLL5 and DAXX. Together with DAXX, prevents MDM2 self-ubiquitination and enhances the E3 ligase activity of MDM2 towards p53/TP53, thereby promoting p53/TP53 ubiquitination and proteasomal degradation. Deubiquitinates p53/TP53, preventing degradation of p53/TP53, and enhances p53/TP53-dependent transcription regulation, cell growth repression and apoptosis. Deubiquitinates p53/TP53 and MDM2 and strongly stabilizes p53/TP53 even in the presence of excess MDM2, and also induces p53/TP53-dependent cell growth repression and apoptosis. Deubiquitination of FOXO4 in presence of hydrogen peroxide is not dependent on p53/TP53 and inhibits FOXO4-induced transcriptional activity. In association with DAXX, is involved in the deubiquitination and translocation of PTEN from the nucleus to the cytoplasm, both processes that are counteracted by PML. Deubiquitinates KMT2E/MLL5 preventing KMT2E/MLL5 proteasomal-mediated degradation. Involved in cell proliferation during early embryonic development. Involved in transcription-coupled nucleotide excision repair (TC-NER) in response to UV damage: recruited to DNA damage sites following interaction with KIAA1530/UVSSA and promotes deubiquitination of ERCC6, preventing UV-induced degradation of ERCC6. Involved in maintenance of DNA methylation via its interaction with UHRF1 and DNMT1: acts by mediating deubiquitination of UHRF1 and DNMT1, preventing their degradation and promoting DNA methylation by DNMT1. Deubiquitinates alkylation repair enzyme ALKBH3. OTUD4 recruits USP7 and USP9X to stabilize ALKBH3, thereby promoting the repair of alkylated DNA lesions. Acts as a chromatin regulator via its association with the Polycomb group (PcG) multiprotein PRC1-like complex; may act by deubiquitinating components of the PRC1-like complex. Able to mediate deubiquitination of histone H2B; it is however unsure whether this activity takes place in vivo. Exhibits a preference towards 'Lys-48'-linked ubiquitin chains. Increases regulatory T-cells (Treg) suppressive capacity by deubiquitinating and stabilizing the transcription factor FOXP3 which is crucial for Treg cell function. Plays a role in the maintenance of the circadian clock periodicity via deubiquitination and stabilization of the CRY1 and CRY2 proteins. Deubiquitinates REST, thereby stabilizing REST and promoting the maintenance of neural progenitor cells. Deubiquitinates SIRT7, inhibiting SIRT7 histone deacetylase activity and regulating gluconeogenesis. Involved in the regulation of WASH-dependent actin polymerization at the surface of endosomes and the regulation of endosomal protein recycling. It maintains optimal WASH complex activity and precise F-actin levels via deubiquitination of TRIM27 and WASHC1. Mediates the deubiquitination of phosphorylated DEPTOR, promoting its stability and leading to decreased mTORC1 signaling. (Microbial infection) Contributes to the overall stabilization and trans-activation capability of the herpesvirus 1 trans-acting transcriptional protein ICP0/VMW110 during HSV-1 infection. Its function is as follows. (Microbial infection) Upon infection with Epstein-Barr virus, the interaction with viral EBNA1 increases the association of USP7 with PML proteins, which is required for the polyubiquitylation and degradation of PML. The sequence is that of Ubiquitin carboxyl-terminal hydrolase 7 from Homo sapiens (Human).